A 245-amino-acid chain; its full sequence is Probable ABC transporter ATP-binding protein p29 (245 aa).

Residues 7–245 (LSFEKVSIIY…KEQLYKIYDN (239 aa)) form the ABC transporter domain. 39 to 46 (GKSGVGKS) serves as a coordination point for ATP.

Belongs to the ABC transporter superfamily.

In terms of biological role, part of a high-affinity transport system. The sequence is that of Probable ABC transporter ATP-binding protein p29 (p29) from Mycoplasma genitalium (strain ATCC 33530 / DSM 19775 / NCTC 10195 / G37) (Mycoplasmoides genitalium).